We begin with the raw amino-acid sequence, 532 residues long: Polyadenylation factor subunit 2 (532 aa).

The segment at 50 to 72 is disordered; sequence AGYQPRQQPQGEEDRRPAHRRTV. The segment covering 61-72 has biased composition (basic and acidic residues); that stretch reads EEDRRPAHRRTV. 7 WD repeats span residues 143–182, 185–224, 227–266, 270–309, 312–353, 376–416, and 432–471; these read KVRH…FESI, AHES…VNVI, AHRE…NAES, GHGW…NVNT, GFKN…SGSS, GHDS…AGGA, and AHDY…DPTS. The tract at residues 513 to 532 is disordered; the sequence is NTAQPEVTDDEPVSIPGFAR.

Its subcellular location is the nucleus. Required for 3'-end cleavage and polyadenylation of pre-mRNAs. Also involved in chromosome segregation where it has a role in chromosome attachment to the mitotic spindle. The sequence is that of Polyadenylation factor subunit 2 (PFS2) from Yarrowia lipolytica (strain CLIB 122 / E 150) (Yeast).